Reading from the N-terminus, the 585-residue chain is Arginine--tRNA ligase (585 aa).

A 'HIGH' region motif is present at residues Ala-131–His-141.

The protein belongs to the class-I aminoacyl-tRNA synthetase family. Monomer.

It is found in the cytoplasm. It carries out the reaction tRNA(Arg) + L-arginine + ATP = L-arginyl-tRNA(Arg) + AMP + diphosphate. This Bartonella quintana (strain Toulouse) (Rochalimaea quintana) protein is Arginine--tRNA ligase.